A 230-amino-acid chain; its full sequence is Acyl-protein thioesterase 1 (230 aa).

Active-site charge relay system residues include Ser119, Asp174, and His208. The residue at position 224 (Lys224) is an N6-acetyllysine.

It belongs to the AB hydrolase superfamily. AB hydrolase 2 family. In terms of assembly, homodimer. As to expression, ubiquitous. Detected at low levels in all tissues tested.

It is found in the cytoplasm. Its subcellular location is the cell membrane. The protein localises to the nucleus membrane. It localises to the endoplasmic reticulum. The catalysed reaction is S-hexadecanoyl-L-cysteinyl-[protein] + H2O = L-cysteinyl-[protein] + hexadecanoate + H(+). It carries out the reaction 1-hexadecanoyl-sn-glycero-3-phosphocholine + H2O = sn-glycerol 3-phosphocholine + hexadecanoate + H(+). It catalyses the reaction a 1-(9Z-octadecenoyl)-2-acyl-sn-glycero-3-phosphocholine + H2O = a 2-acyl-sn-glycero-3-phosphocholine + (9Z)-octadecenoate + H(+). Its function is as follows. Acts as an acyl-protein thioesterase. Hydrolyzes fatty acids from S-acylated cysteine residues in proteins such as trimeric G alpha proteins or HRAS. Acts as a palmitoyl thioesterase that catalyzes depalmitoylation of proteins, such as ADRB2, KCNMA1 and SQSTM1. Acts as a negative regulator of autophagy by mediating palmitoylation of SQSTM1, decreasing affinity between SQSTM1 and ATG8 proteins and recruitment of ubiquitinated cargo proteins to autophagosomes. Acts as a lysophospholipase and hydrolyzes lysophosphatidylcholine (lyso-PC). Also hydrolyzes lysophosphatidylethanolamine (lyso-PE), lysophosphatidylinositol (lyso-PI) and lysophosphatidylserine (lyso-PS). Has much higher thioesterase activity than lysophospholipase activity. Contributes to the production of lysophosphatidic acid (LPA) during blood coagulation by recognizing and cleaving plasma phospholipids to generate lysophospholipids which in turn act as substrates for ENPP2 to produce LPA. The protein is Acyl-protein thioesterase 1 (Lypla1) of Rattus norvegicus (Rat).